The following is a 160-amino-acid chain: MFKFLSQMQLTRFFVGFRTVLWYFFAPKVTIKYPQEKGPISLRFRGEHALRRYKNGEERCIACKLCEVVCPAQAITIEAAPRESDGSRRATKYDIDMTKCIYCGFCQEACPVDAIVEGPNFEFARENREDLLYDKKKLLDNGSKWESALIKMLNRNDTTH.

2 4Fe-4S ferredoxin-type domains span residues 51–80 (RRYK…IEAA) and 91–120 (TKYD…EGPN). [4Fe-4S] cluster-binding residues include Cys60, Cys63, Cys66, Cys70, Cys100, Cys103, Cys106, and Cys110.

Belongs to the complex I 23 kDa subunit family. As to quaternary structure, NDH-1 is composed of 14 different subunits. Subunits NuoA, H, J, K, L, M, N constitute the membrane sector of the complex. The cofactor is [4Fe-4S] cluster.

The protein localises to the cell inner membrane. The enzyme catalyses a quinone + NADH + 5 H(+)(in) = a quinol + NAD(+) + 4 H(+)(out). NDH-1 shuttles electrons from NADH, via FMN and iron-sulfur (Fe-S) centers, to quinones in the respiratory chain. The immediate electron acceptor for the enzyme in this species is believed to be ubiquinone. Couples the redox reaction to proton translocation (for every two electrons transferred, four hydrogen ions are translocated across the cytoplasmic membrane), and thus conserves the redox energy in a proton gradient. The protein is NADH-quinone oxidoreductase subunit I of Neorickettsia sennetsu (strain ATCC VR-367 / Miyayama) (Ehrlichia sennetsu).